The following is a 647-amino-acid chain: Threonine--tRNA ligase (647 aa).

The TGS domain occupies methionine 1–threonine 61. The interval aspartate 240 to proline 538 is catalytic. 3 residues coordinate Zn(2+): cysteine 334, histidine 385, and histidine 515.

The protein belongs to the class-II aminoacyl-tRNA synthetase family. Homodimer. Requires Zn(2+) as cofactor.

The protein resides in the cytoplasm. The enzyme catalyses tRNA(Thr) + L-threonine + ATP = L-threonyl-tRNA(Thr) + AMP + diphosphate + H(+). Functionally, catalyzes the attachment of threonine to tRNA(Thr) in a two-step reaction: L-threonine is first activated by ATP to form Thr-AMP and then transferred to the acceptor end of tRNA(Thr). Also edits incorrectly charged L-seryl-tRNA(Thr). This chain is Threonine--tRNA ligase, found in Streptococcus agalactiae serotype III (strain NEM316).